The following is a 221-amino-acid chain: Glutathione S-transferase alpha-5 (221 aa).

One can recognise a GST N-terminal domain in the interval 3 to 83 (GKPVLHYFDG…YIATKYNLYG (81 aa)). Lys4 carries the N6-succinyllysine modification. Glutathione contacts are provided by residues Tyr9, Arg45, 54 to 55 (QV), and 67 to 68 (QT). Positions 85-207 (DMKERALIDM…LQPGSQRKPF (123 aa)) constitute a GST C-terminal domain.

It belongs to the GST superfamily. Alpha family. In terms of assembly, heterodimer of YC1 and YC2. As to expression, liver, nasal mucosa and epididymis.

It localises to the cytoplasm. It catalyses the reaction RX + glutathione = an S-substituted glutathione + a halide anion + H(+). In terms of biological role, conjugation of reduced glutathione to a wide number of exogenous and endogenous hydrophobic electrophiles. Has substantial activity toward aflatoxin B1-8,9-epoxide. The polypeptide is Glutathione S-transferase alpha-5 (Gsta5) (Rattus norvegicus (Rat)).